The sequence spans 103 residues: Large ribosomal subunit protein bL21 (103 aa).

Belongs to the bacterial ribosomal protein bL21 family. Part of the 50S ribosomal subunit. Contacts protein L20.

This protein binds to 23S rRNA in the presence of protein L20. The sequence is that of Large ribosomal subunit protein bL21 from Actinobacillus pleuropneumoniae serotype 5b (strain L20).